Consider the following 222-residue polypeptide: Phosphoribosylformylglycinamidine synthase subunit PurQ (222 aa).

The region spanning 3 to 222 (AAVVVFPGSN…RALSGLLTDA (220 aa)) is the Glutamine amidotransferase type-1 domain. Cysteine 86 acts as the Nucleophile in catalysis. Active-site residues include histidine 194 and glutamate 196.

In terms of assembly, part of the FGAM synthase complex composed of 1 PurL, 1 PurQ and 2 PurS subunits.

Its subcellular location is the cytoplasm. It carries out the reaction N(2)-formyl-N(1)-(5-phospho-beta-D-ribosyl)glycinamide + L-glutamine + ATP + H2O = 2-formamido-N(1)-(5-O-phospho-beta-D-ribosyl)acetamidine + L-glutamate + ADP + phosphate + H(+). It catalyses the reaction L-glutamine + H2O = L-glutamate + NH4(+). It participates in purine metabolism; IMP biosynthesis via de novo pathway; 5-amino-1-(5-phospho-D-ribosyl)imidazole from N(2)-formyl-N(1)-(5-phospho-D-ribosyl)glycinamide: step 1/2. Part of the phosphoribosylformylglycinamidine synthase complex involved in the purines biosynthetic pathway. Catalyzes the ATP-dependent conversion of formylglycinamide ribonucleotide (FGAR) and glutamine to yield formylglycinamidine ribonucleotide (FGAM) and glutamate. The FGAM synthase complex is composed of three subunits. PurQ produces an ammonia molecule by converting glutamine to glutamate. PurL transfers the ammonia molecule to FGAR to form FGAM in an ATP-dependent manner. PurS interacts with PurQ and PurL and is thought to assist in the transfer of the ammonia molecule from PurQ to PurL. This Ruegeria sp. (strain TM1040) (Silicibacter sp.) protein is Phosphoribosylformylglycinamidine synthase subunit PurQ.